Here is a 150-residue protein sequence, read N- to C-terminus: Macrodomain Ter protein (150 aa).

Belongs to the MatP family. In terms of assembly, homodimer.

The protein localises to the cytoplasm. Required for spatial organization of the terminus region of the chromosome (Ter macrodomain) during the cell cycle. Prevents early segregation of duplicated Ter macrodomains during cell division. Binds specifically to matS, which is a 13 bp signature motif repeated within the Ter macrodomain. In Erwinia tasmaniensis (strain DSM 17950 / CFBP 7177 / CIP 109463 / NCPPB 4357 / Et1/99), this protein is Macrodomain Ter protein.